The sequence spans 290 residues: MDIEAYFERIGYQSSRNKLDLEELTEILQHQIRAIPFENLNIHCGESMELNLEVIFDQVVRKKRGGWCLQVNHLLYWALTKMGFEATMLGGYVFNTPANKYSSGMIHLLVQVTLSGKDYIVDAGFGRSYQMWEPLELTSGKDQPQVPAIFRLTEENGTWYLDQIRREQYVPNQEFVNSDLLEKNKYRKIYSFTLEPRTIEDFESINTYLQTSPASLFTSKSFCSLQTLEGVHCLVGSTLTYRRFSYKDNIDLVEFKSLTEEEIEDVLKTIFGVSLERKLVPKHGDRFFTI.

Catalysis depends on Cys68, which acts as the Acyl-thioester intermediate. Residues Ser103 and Gly104 each coordinate CoA. A substrate-binding site is contributed by 106-107 (IH). Active-site residues include His107 and Asp122. Residue Tyr208 participates in CoA binding.

Belongs to the arylamine N-acetyltransferase family.

Its subcellular location is the cytoplasm. The enzyme catalyses an arylamine + acetyl-CoA = an N-acetylarylamine + CoA. It catalyses the reaction an N-hydroxyarylamine + acetyl-CoA = an N-acetoxyarylamine + CoA. Functionally, catalyzes the N- or O-acetylation of various arylamine and heterocyclic amine substrates. Participates in the detoxification of a plethora of hydrazine and arylamine drugs. This is Arylamine N-acetyltransferase 2 (Nat2) from Rattus norvegicus (Rat).